The sequence spans 302 residues: Oxygen-dependent coproporphyrinogen-III oxidase (302 aa).

Substrate is bound at residue S94. Residues H98 and H108 each contribute to the a divalent metal cation site. H108 (proton donor) is an active-site residue. 110–112 (NVR) is a substrate binding site. The a divalent metal cation site is built by H147 and H177. An important for dimerization region spans residues 242–277 (YVEFNLVYDRGTLFGLQTGGRTESILMSMPPLVRWQ). 260 to 262 (GGR) provides a ligand contact to substrate.

The protein belongs to the aerobic coproporphyrinogen-III oxidase family. Homodimer. Requires a divalent metal cation as cofactor.

It localises to the cytoplasm. It carries out the reaction coproporphyrinogen III + O2 + 2 H(+) = protoporphyrinogen IX + 2 CO2 + 2 H2O. Its pathway is porphyrin-containing compound metabolism; protoporphyrin-IX biosynthesis; protoporphyrinogen-IX from coproporphyrinogen-III (O2 route): step 1/1. Functionally, involved in the heme biosynthesis. Catalyzes the aerobic oxidative decarboxylation of propionate groups of rings A and B of coproporphyrinogen-III to yield the vinyl groups in protoporphyrinogen-IX. The chain is Oxygen-dependent coproporphyrinogen-III oxidase from Shewanella sp. (strain MR-4).